The primary structure comprises 477 residues: Cysteine--tRNA ligase (477 aa).

Zn(2+) is bound at residue Cys28. The 'HIGH' region motif lies at 30–40; that stretch reads PTVYDYAHIGN. Zn(2+) is bound by residues Cys213, His238, and Glu242. The 'KMSKS' region signature appears at 270 to 274; sequence KMSKS. Residue Lys273 participates in ATP binding.

Belongs to the class-I aminoacyl-tRNA synthetase family. In terms of assembly, monomer. Requires Zn(2+) as cofactor.

The protein localises to the cytoplasm. It catalyses the reaction tRNA(Cys) + L-cysteine + ATP = L-cysteinyl-tRNA(Cys) + AMP + diphosphate. The sequence is that of Cysteine--tRNA ligase from Chlamydia trachomatis serovar A (strain ATCC VR-571B / DSM 19440 / HAR-13).